The chain runs to 468 residues: 3-isopropylmalate dehydratase large subunit (468 aa).

Positions 349, 409, and 412 each coordinate [4Fe-4S] cluster.

Belongs to the aconitase/IPM isomerase family. LeuC type 1 subfamily. As to quaternary structure, heterodimer of LeuC and LeuD. [4Fe-4S] cluster serves as cofactor.

It catalyses the reaction (2R,3S)-3-isopropylmalate = (2S)-2-isopropylmalate. It participates in amino-acid biosynthesis; L-leucine biosynthesis; L-leucine from 3-methyl-2-oxobutanoate: step 2/4. Catalyzes the isomerization between 2-isopropylmalate and 3-isopropylmalate, via the formation of 2-isopropylmaleate. In Shewanella baltica (strain OS185), this protein is 3-isopropylmalate dehydratase large subunit.